Consider the following 173-residue polypeptide: Crossover junction endodeoxyribonuclease RuvC (173 aa).

Residues aspartate 8, glutamate 67, and aspartate 139 contribute to the active site. 3 residues coordinate Mg(2+): aspartate 8, glutamate 67, and aspartate 139.

Belongs to the RuvC family. Homodimer which binds Holliday junction (HJ) DNA. The HJ becomes 2-fold symmetrical on binding to RuvC with unstacked arms; it has a different conformation from HJ DNA in complex with RuvA. In the full resolvosome a probable DNA-RuvA(4)-RuvB(12)-RuvC(2) complex forms which resolves the HJ. It depends on Mg(2+) as a cofactor.

It is found in the cytoplasm. The enzyme catalyses Endonucleolytic cleavage at a junction such as a reciprocal single-stranded crossover between two homologous DNA duplexes (Holliday junction).. Its function is as follows. The RuvA-RuvB-RuvC complex processes Holliday junction (HJ) DNA during genetic recombination and DNA repair. Endonuclease that resolves HJ intermediates. Cleaves cruciform DNA by making single-stranded nicks across the HJ at symmetrical positions within the homologous arms, yielding a 5'-phosphate and a 3'-hydroxyl group; requires a central core of homology in the junction. The consensus cleavage sequence is 5'-(A/T)TT(C/G)-3'. Cleavage occurs on the 3'-side of the TT dinucleotide at the point of strand exchange. HJ branch migration catalyzed by RuvA-RuvB allows RuvC to scan DNA until it finds its consensus sequence, where it cleaves and resolves the cruciform DNA. The chain is Crossover junction endodeoxyribonuclease RuvC from Aliivibrio salmonicida (strain LFI1238) (Vibrio salmonicida (strain LFI1238)).